Reading from the N-terminus, the 85-residue chain is Makatoxin-3 (85 aa).

The signal sequence occupies residues 1-19 (MNYLIVISFALLLMTGVES). Positions 21 to 83 (RDAYIAKKEN…VPIRIPGPCI (63 aa)) constitute an LCN-type CS-alpha/beta domain. 4 disulfides stabilise this stretch: C31–C82, C35–C55, C41–C65, and C45–C67.

This sequence belongs to the long (4 C-C) scorpion toxin superfamily. Sodium channel inhibitor family. Alpha subfamily. As to expression, expressed by the venom gland.

The protein resides in the secreted. Functionally, this protein markedly relaxes the rat carbachol-precontracted anococcygeus muscle. This relaxation is inhibited by the inhibitor of nitric oxide (NO) synthase, N-nitro-L-arginine methyl ester (L-NAME), suggesting that the response induced by this protein is NO-mediated. The protein is Makatoxin-3 of Olivierus martensii (Manchurian scorpion).